The following is a 301-amino-acid chain: Protoheme IX farnesyltransferase (301 aa).

Helical transmembrane passes span 16–36, 41–61, 93–113, 114–134, 141–161, 172–192, 217–237, 238–258, and 273–293; these read VVAL…PGIP, IQSG…AAAI, VFAG…VNLI, TAVL…VYLK, IVIG…AVTG, SLLV…LAIF, QILL…ATGM, SGVF…WYAW, and FGYS…DHWL.

Belongs to the UbiA prenyltransferase family. Protoheme IX farnesyltransferase subfamily.

The protein resides in the cell inner membrane. It catalyses the reaction heme b + (2E,6E)-farnesyl diphosphate + H2O = Fe(II)-heme o + diphosphate. It functions in the pathway porphyrin-containing compound metabolism; heme O biosynthesis; heme O from protoheme: step 1/1. Functionally, converts heme B (protoheme IX) to heme O by substitution of the vinyl group on carbon 2 of heme B porphyrin ring with a hydroxyethyl farnesyl side group. In Xylella fastidiosa (strain 9a5c), this protein is Protoheme IX farnesyltransferase.